A 239-amino-acid chain; its full sequence is Putative 3-methyladenine DNA glycosylase (239 aa).

This sequence belongs to the DNA glycosylase MPG family.

This is Putative 3-methyladenine DNA glycosylase from Pseudomonas aeruginosa (strain UCBPP-PA14).